An 809-amino-acid chain; its full sequence is Phenylalanine--tRNA ligase beta subunit (809 aa).

In terms of domain architecture, tRNA-binding spans 39–154; it reads APPTSKIVVG…EDTPVGQDIR (116 aa). The B5 domain occupies 405–480; the sequence is PQRAPVKMRV…RIYGFEKIPA (76 aa). Mg(2+) contacts are provided by Asp-458, Asp-464, Glu-467, and Glu-468. Residues 707 to 808 enclose the FDX-ACB domain; sequence SKFPPVRRDI…RMARAGARLR (102 aa).

Belongs to the phenylalanyl-tRNA synthetase beta subunit family. Type 1 subfamily. As to quaternary structure, tetramer of two alpha and two beta subunits. Mg(2+) is required as a cofactor.

Its subcellular location is the cytoplasm. The enzyme catalyses tRNA(Phe) + L-phenylalanine + ATP = L-phenylalanyl-tRNA(Phe) + AMP + diphosphate + H(+). The sequence is that of Phenylalanine--tRNA ligase beta subunit from Burkholderia lata (strain ATCC 17760 / DSM 23089 / LMG 22485 / NCIMB 9086 / R18194 / 383).